A 185-amino-acid chain; its full sequence is Ribosome-recycling factor (185 aa).

Belongs to the RRF family.

The protein resides in the cytoplasm. Functionally, responsible for the release of ribosomes from messenger RNA at the termination of protein biosynthesis. May increase the efficiency of translation by recycling ribosomes from one round of translation to another. The protein is Ribosome-recycling factor of Thermus thermophilus (strain ATCC BAA-163 / DSM 7039 / HB27).